A 638-amino-acid polypeptide reads, in one-letter code: SUMO-activating enzyme subunit 2 (638 aa).

ATP contacts are provided by residues 24-29 (GAGGIG), Asp48, 56-59 (NLNR), Lys72, 95-96 (SI), and 117-122 (DNRAAR). Zn(2+) contacts are provided by Cys158 and Cys161. Lys164 is covalently cross-linked (Glycyl lysine isopeptide (Lys-Gly) (interchain with G-Cter in SUMO1)). The active-site Glycyl thioester intermediate is the Cys173. Lys190 is covalently cross-linked (Glycyl lysine isopeptide (Lys-Gly) (interchain with G-Cter in SUMO)). A disordered region spans residues 202 to 233 (ADQEVSPDRADPEAAWEPTEAEARARASNEDG). Ser207 bears the Phosphoserine mark. A compositionally biased stretch (basic and acidic residues) spans 222–233 (AEARARASNEDG). Residue Lys236 forms a Glycyl lysine isopeptide (Lys-Gly) (interchain with G-Cter in SUMO1); alternate linkage. Residues Lys236 and Lys257 each participate in a glycyl lysine isopeptide (Lys-Gly) (interchain with G-Cter in SUMO2); alternate cross-link. Residues Lys257 and Lys271 each participate in a glycyl lysine isopeptide (Lys-Gly) (interchain with G-Cter in SUMO); alternate cross-link. Lys271 is modified (N6-acetyllysine; alternate). Residue Lys275 forms a Glycyl lysine isopeptide (Lys-Gly) (interchain with G-Cter in SUMO) linkage. Residue Lys369 forms a Glycyl lysine isopeptide (Lys-Gly) (interchain with G-Cter in SUMO2) linkage. Residue Lys418 forms a Glycyl lysine isopeptide (Lys-Gly) (interchain with G-Cter in SUMO1); alternate linkage. A Glycyl lysine isopeptide (Lys-Gly) (interchain with G-Cter in SUMO2); alternate cross-link involves residue Lys418. Residues Cys439 and Cys442 each contribute to the Zn(2+) site. At Ser505 the chain carries Phosphoserine. A Glycyl lysine isopeptide (Lys-Gly) (interchain with G-Cter in SUMO2) cross-link involves residue Lys538. Residues Ser548 and Ser590 each carry the phosphoserine modification. A compositionally biased stretch (basic and acidic residues) spans 548 to 561 (SPEKVGPKQAEDAA). The segment at 548-638 (SPEKVGPKQA…EDPDDVIALD (91 aa)) is disordered. Residues 581-594 (EQDDVLIVDSDEEG) are compositionally biased toward acidic residues. The span at 603–614 (GDDKARKRKLEE) shows a compositional bias: basic and acidic residues. Lys609 participates in a covalent cross-link: Glycyl lysine isopeptide (Lys-Gly) (interchain with G-Cter in SUMO). Lys611 participates in a covalent cross-link: Glycyl lysine isopeptide (Lys-Gly) (interchain with G-Cter in SUMO); alternate. Lys611 carries the post-translational modification N6-acetyllysine; alternate. Lys621 participates in a covalent cross-link: Glycyl lysine isopeptide (Lys-Gly) (interchain with G-Cter in SUMO). Acidic residues predominate over residues 628–638 (MEDPDDVIALD).

Belongs to the ubiquitin-activating E1 family. Heterodimer of SAE1 and UBA2/SAE2. The heterodimer corresponds to the two domains that are encoded on a single polypeptide chain in ubiquitin-activating enzyme E1. Interacts with UBE2I. Sumoylated with SUMO1 and SUMO2/3 and by UBC9. Sumoylation at Lys-236 inhibits enzymatic activity. Sumoylation at the C-terminal lysine cluster plays an essential role in nuclear trafficking. Broadly expressed, with highest levels in testis.

Its subcellular location is the cytoplasm. It localises to the nucleus. Its pathway is protein modification; protein sumoylation. In terms of biological role, the heterodimer acts as an E1 ligase for SUMO1, SUMO2, SUMO3, and probably SUMO4. It mediates ATP-dependent activation of SUMO proteins followed by formation of a thioester bond between a SUMO protein and a conserved active site cysteine residue on UBA2/SAE2. The chain is SUMO-activating enzyme subunit 2 (Uba2) from Mus musculus (Mouse).